The chain runs to 496 residues: Alanine aminotransferase 1 (496 aa).

N-acetylalanine is present on Ala-2. Residue Thr-22 is modified to Phosphothreonine. Lys-314 carries the N6-(pyridoxal phosphate)lysine modification.

This sequence belongs to the class-I pyridoxal-phosphate-dependent aminotransferase family. Alanine aminotransferase subfamily. Homodimer. The cofactor is pyridoxal 5'-phosphate.

It localises to the cytoplasm. It carries out the reaction L-alanine + 2-oxoglutarate = pyruvate + L-glutamate. It participates in amino-acid degradation; L-alanine degradation via transaminase pathway; pyruvate from L-alanine: step 1/1. Functionally, catalyzes the reversible transamination between alanine and 2-oxoglutarate to form pyruvate and glutamate. Participates in cellular nitrogen metabolism and also in liver gluconeogenesis starting with precursors transported from skeletal muscles. This Bos taurus (Bovine) protein is Alanine aminotransferase 1 (GPT).